The chain runs to 646 residues: Threonine--tRNA ligase (646 aa).

A TGS domain is found at 1–61 (MIKITFPDGN…NEDSNFEIVT (61 aa)). A catalytic region spans residues 242–540 (DHRKLGRELD…LIEVYKGAFP (299 aa)). Zn(2+) contacts are provided by Cys336, His387, and His517.

Belongs to the class-II aminoacyl-tRNA synthetase family. As to quaternary structure, homodimer. Zn(2+) serves as cofactor.

Its subcellular location is the cytoplasm. It catalyses the reaction tRNA(Thr) + L-threonine + ATP = L-threonyl-tRNA(Thr) + AMP + diphosphate + H(+). Functionally, catalyzes the attachment of threonine to tRNA(Thr) in a two-step reaction: L-threonine is first activated by ATP to form Thr-AMP and then transferred to the acceptor end of tRNA(Thr). Also edits incorrectly charged L-seryl-tRNA(Thr). This is Threonine--tRNA ligase from Lactococcus lactis subsp. lactis (strain IL1403) (Streptococcus lactis).